The sequence spans 185 residues: ATP-dependent protease subunit HslV (185 aa).

T13 is an active-site residue. Residues G167, C170, and T173 each coordinate Na(+).

The protein belongs to the peptidase T1B family. HslV subfamily. In terms of assembly, a double ring-shaped homohexamer of HslV is capped on each side by a ring-shaped HslU homohexamer. The assembly of the HslU/HslV complex is dependent on binding of ATP.

The protein resides in the cytoplasm. It carries out the reaction ATP-dependent cleavage of peptide bonds with broad specificity.. Allosterically activated by HslU binding. Its function is as follows. Protease subunit of a proteasome-like degradation complex believed to be a general protein degrading machinery. The protein is ATP-dependent protease subunit HslV of Sinorhizobium medicae (strain WSM419) (Ensifer medicae).